The primary structure comprises 286 residues: ATP synthase gamma chain (286 aa).

The protein belongs to the ATPase gamma chain family. F-type ATPases have 2 components, CF(1) - the catalytic core - and CF(0) - the membrane proton channel. CF(1) has five subunits: alpha(3), beta(3), gamma(1), delta(1), epsilon(1). CF(0) has three main subunits: a, b and c.

Its subcellular location is the cell membrane. Functionally, produces ATP from ADP in the presence of a proton gradient across the membrane. The gamma chain is believed to be important in regulating ATPase activity and the flow of protons through the CF(0) complex. This Bacillus anthracis (strain A0248) protein is ATP synthase gamma chain.